The sequence spans 226 residues: Biosynthetic peptidoglycan transglycosylase (226 aa).

Residues 7–29 (VMALSAIGLLLLPYLLTPLYRIG) form a helical membrane-spanning segment.

Belongs to the glycosyltransferase 51 family.

The protein resides in the cell inner membrane. It carries out the reaction [GlcNAc-(1-&gt;4)-Mur2Ac(oyl-L-Ala-gamma-D-Glu-L-Lys-D-Ala-D-Ala)](n)-di-trans,octa-cis-undecaprenyl diphosphate + beta-D-GlcNAc-(1-&gt;4)-Mur2Ac(oyl-L-Ala-gamma-D-Glu-L-Lys-D-Ala-D-Ala)-di-trans,octa-cis-undecaprenyl diphosphate = [GlcNAc-(1-&gt;4)-Mur2Ac(oyl-L-Ala-gamma-D-Glu-L-Lys-D-Ala-D-Ala)](n+1)-di-trans,octa-cis-undecaprenyl diphosphate + di-trans,octa-cis-undecaprenyl diphosphate + H(+). It participates in cell wall biogenesis; peptidoglycan biosynthesis. Peptidoglycan polymerase that catalyzes glycan chain elongation from lipid-linked precursors. The sequence is that of Biosynthetic peptidoglycan transglycosylase from Nitrobacter winogradskyi (strain ATCC 25391 / DSM 10237 / CIP 104748 / NCIMB 11846 / Nb-255).